A 180-amino-acid chain; its full sequence is Crossover junction endodeoxyribonuclease RuvC (180 aa).

Active-site residues include Asp7, Glu66, and Asp138. Mg(2+) is bound by residues Asp7, Glu66, and Asp138.

It belongs to the RuvC family. As to quaternary structure, homodimer which binds Holliday junction (HJ) DNA. The HJ becomes 2-fold symmetrical on binding to RuvC with unstacked arms; it has a different conformation from HJ DNA in complex with RuvA. In the full resolvosome a probable DNA-RuvA(4)-RuvB(12)-RuvC(2) complex forms which resolves the HJ. The cofactor is Mg(2+).

It is found in the cytoplasm. It catalyses the reaction Endonucleolytic cleavage at a junction such as a reciprocal single-stranded crossover between two homologous DNA duplexes (Holliday junction).. The RuvA-RuvB-RuvC complex processes Holliday junction (HJ) DNA during genetic recombination and DNA repair. Endonuclease that resolves HJ intermediates. Cleaves cruciform DNA by making single-stranded nicks across the HJ at symmetrical positions within the homologous arms, yielding a 5'-phosphate and a 3'-hydroxyl group; requires a central core of homology in the junction. The consensus cleavage sequence is 5'-(A/T)TT(C/G)-3'. Cleavage occurs on the 3'-side of the TT dinucleotide at the point of strand exchange. HJ branch migration catalyzed by RuvA-RuvB allows RuvC to scan DNA until it finds its consensus sequence, where it cleaves and resolves the cruciform DNA. This Paraburkholderia phytofirmans (strain DSM 17436 / LMG 22146 / PsJN) (Burkholderia phytofirmans) protein is Crossover junction endodeoxyribonuclease RuvC.